We begin with the raw amino-acid sequence, 336 residues long: Cytochrome P450 monooxygenase lcsN (336 aa).

Cys271 provides a ligand contact to heme.

The protein belongs to the cytochrome P450 family. It depends on heme as a cofactor.

The protein operates within secondary metabolite biosynthesis. Cytochrome P450 monooxygenase; part of the gene cluster that mediates the biosynthesis of the lipopeptide antibiotics leucinostatins that show extensive biological activities, including antimalarial, antiviral, antibacterial, antifungal, and antitumor activities, as well as phytotoxic. Leucinostatin A contains nine amino acid residues, including the unusual amino acid 4-methyl-L-proline (MePro), 2-amino-6-hydroxy-4-methyl-8-oxodecanoic acid (AHyMeOA), 3-hydroxyleucine (HyLeu), alpha-aminoisobutyric acid (AIB), beta-Ala, a 4-methylhex-2-enoic acid at the N-terminus as well as a N1,N1-dimethylpropane-1,2-diamine (DPD) at the C-terminus. The biosynthesis of leucinostatins is probably initiated with the assembly of 4-methylhex-2-enoic acid by a reducing PKS. Two reducing polyketide synthases, lcsB and lcsC, have been identified in the cluster and it is not clear which is the one that assembles 4-methylhex-2-enoic acid since both contain KS, AT, DH, cMT, ER, KR and ACP domains. The polyketide residue might be transferred to the NRPS lcsA, mediated by two additional enzymes, the acyl-CoA ligase lcsD and the thioesterase lcsE. The linear polyketide carboxylic acid, which is released from PKS, is converted to a CoA thioester by lcsD, and then lcsE hydrolyzes the thiol bond and shuttles the polyketide intermediate to lcsA. The C domain of the first module catalyzed the condensation of 4-methylhex-2-enoic acid and MePro carried by domain A1, followed by successive condensations of nine amino acids to trigger the elongation of the linear peptide. A5 and A6 domains of lcsA are proposed to incorporate leucine, A2 AHyMeOA, and A3 incorporates HyLeu. A4, A7 and A8 incorporate AIB. The AHyMeOA in leucinostatin A activated by the A2 might be produced by the second PKS (lcsB or lcsC) present within the cluster. The MePro is probably produced via leucine cyclization and may originate from a separate pathway, independent of the cluster. Another nonproteinogenic amino acid, beta-Ala, could be produced by an aspartic acid decarboxylase also localized outside of the cluster. Two candidates are VFPBJ_01400 and VFPBJ_10476. The final peptide scaffold may be released by the NAD(P)H-dependent thioester reductase (TE) at the C-terminal region of lcsA. Transamination of the lcsA product by the transaminase lcsP may produce DPD at the C-terminus. Further hydroxylation steps performed alternatively by the cytochrome P450 monooxygenases lcsI, lcsK and lcsN then yield the non-methylated leucinostatins precursor. It is also possible that leucines can be hydroxylated prior to their incorporation into the peptide. Varying extents of methylation then lead to the formation of leucinostatins A and B. The sequence is that of Cytochrome P450 monooxygenase lcsN from Purpureocillium lilacinum (Paecilomyces lilacinus).